Reading from the N-terminus, the 97-residue chain is Sperm protein associated with the nucleus on the X chromosome A (97 aa).

The tract at residues 1–49 (MDKQSSAGGVKRSVPCDSNEANEMMPETPTGDSDPQPAPKKMKTSESST) is disordered. Positions 37–45 (PAPKKMKTS) match the Nuclear localization signal motif.

Belongs to the SPAN-X family. Detected in testis and sperm.

It is found in the cytoplasm. Its subcellular location is the nucleus. The protein is Sperm protein associated with the nucleus on the X chromosome A of Homo sapiens (Human).